Reading from the N-terminus, the 324-residue chain is Protoheme IX farnesyltransferase (324 aa).

9 helical membrane passes run 31–51 (LILL…SGQV), 56–76 (FLTT…INCI), 105–125 (VFAA…ANLL), 126–146 (SACL…YWLK), 153–173 (IVIG…AVTG), 181–201 (VLFA…AMMI), 214–234 (PVVN…LLLL), 238–258 (LLLV…AIVL), and 285–305 (FSIL…LPWT).

The protein belongs to the UbiA prenyltransferase family. Protoheme IX farnesyltransferase subfamily.

It localises to the cell inner membrane. The enzyme catalyses heme b + (2E,6E)-farnesyl diphosphate + H2O = Fe(II)-heme o + diphosphate. Its pathway is porphyrin-containing compound metabolism; heme O biosynthesis; heme O from protoheme: step 1/1. Its function is as follows. Converts heme B (protoheme IX) to heme O by substitution of the vinyl group on carbon 2 of heme B porphyrin ring with a hydroxyethyl farnesyl side group. This Acaryochloris marina (strain MBIC 11017) protein is Protoheme IX farnesyltransferase.